A 330-amino-acid polypeptide reads, in one-letter code: 2-methoxy-6-polyprenyl-1,4-benzoquinol methylase, mitochondrial (330 aa).

A mitochondrion-targeting transit peptide spans methionine 1 to leucine 42. S-adenosyl-L-methionine is bound by residues threonine 117, aspartate 171, and aspartate 199–alanine 200.

The protein belongs to the class I-like SAM-binding methyltransferase superfamily. MenG/UbiE family. As to quaternary structure, component of a multi-subunit COQ enzyme complex, composed of at least COQ3, COQ4, COQ5, COQ6, COQ7 and COQ9. Interacts with PYURF; the interaction is direct, stabilizes COQ5 protein and associates PYURF with COQ enzyme complex.

It localises to the mitochondrion inner membrane. It catalyses the reaction 2-methoxy-6-(all-trans-decaprenyl)benzene-1,4-diol + S-adenosyl-L-methionine = 5-methoxy-2-methyl-3-(all-trans-decaprenyl)benzene-1,4-diol + S-adenosyl-L-homocysteine + H(+). The protein operates within cofactor biosynthesis; ubiquinone biosynthesis. Methyltransferase required for the conversion of 2-decaprenyl-6-methoxy-1,4-benzoquinol (DDMQH2) to 2-decaprenyl-3-methyl-6-methoxy-1,4-benzoquinol (DMQH2). This chain is 2-methoxy-6-polyprenyl-1,4-benzoquinol methylase, mitochondrial, found in Bos taurus (Bovine).